The sequence spans 217 residues: UPF0319 protein HS_1349 (217 aa).

The N-terminal stretch at 1–21 (MKFSFAALASAMLLTSTAAFA) is a signal peptide.

It belongs to the UPF0319 family.

This is UPF0319 protein HS_1349 from Histophilus somni (strain 129Pt) (Haemophilus somnus).